Here is a 380-residue protein sequence, read N- to C-terminus: Cystathionine gamma-synthase (380 aa).

At Lys195 the chain carries N6-(pyridoxal phosphate)lysine.

It belongs to the trans-sulfuration enzymes family. Homotetramer. The cofactor is pyridoxal 5'-phosphate.

The protein localises to the cytoplasm. The enzyme catalyses O-succinyl-L-homoserine + L-cysteine = L,L-cystathionine + succinate + H(+). In terms of biological role, catalyzes the formation of L-cystathionine from O-succinyl-L-homoserine (OSHS) and L-cysteine, via a gamma-replacement reaction. In the absence of thiol, catalyzes gamma-elimination to form 2-oxobutanoate, succinate and ammonia. The polypeptide is Cystathionine gamma-synthase (metB) (Helicobacter pylori (strain ATCC 700392 / 26695) (Campylobacter pylori)).